We begin with the raw amino-acid sequence, 415 residues long: Fructose-like permease IIC component (415 aa).

The Cytoplasmic portion of the chain corresponds to 1–46 (MAIKKRSATVVPGASGAAAAVKNPQASKSSFWGELPQHVMSGISRM). Residues 35–410 (LPQHVMSGIS…RLMMFRKGKL (376 aa)) enclose the PTS EIIC type-2 domain. A helical membrane pass occupies residues 47–67 (VPTLIMGGVILAFSQLIAYSW). The Periplasmic portion of the chain corresponds to 68 to 101 (LKIPAEIGIMDALNSGKFSGFDLSLLKFAWLSQS). The helical transmembrane segment at 102–122 (FGGVLFGFAIPMFAAFVANSI) threads the bilayer. At 123–126 (GGKL) the chain is on the cytoplasmic side. A helical transmembrane segment spans residues 127-147 (AFPAGFIGGLMSTQPTQLLNF). At 148–157 (DPSTMQWATS) the chain is on the periplasmic side. A helical transmembrane segment spans residues 158 to 178 (SPVPSTFIGALIISIVAGYLV). Residues 179–197 (KWMNQKIQLPDFLLAFKTT) lie on the Cytoplasmic side of the membrane. A helical membrane pass occupies residues 198–218 (FLLPILSAIFVMLAMYYVITP). Over 219 to 237 (FGGWINGGIRTVLTAAGEK) the chain is Periplasmic. A helical transmembrane segment spans residues 238–258 (GALMYAMGIAAATAIDLGGPI). The Cytoplasmic portion of the chain corresponds to 259 to 276 (NKAAGFVAFSFTTDHVLP). The helical transmembrane segment at 277-297 (VTARSIAIVIPPIGLGLATII) threads the bilayer. The Periplasmic segment spans residues 298–318 (DRRLTGKRLFNAQLYPQGKTA). Residues 319-339 (MFLAFMGISEGAIPFALESPI) traverse the membrane as a helical segment. Topologically, residues 340-341 (TA) are cytoplasmic. The chain crosses the membrane as a helical span at residues 342 to 362 (IPSYMVGAIVGSTAAVWLGAV). Residues 363–378 (QWFPESAIWAWPLVTN) are Periplasmic-facing. Residues 379 to 399 (LGVYMAGIALGAVITALMVVF) form a helical membrane-spanning segment. The Cytoplasmic segment spans residues 400–415 (LRLMMFRKGKLLIDSL).

It localises to the cell inner membrane. In terms of biological role, the phosphoenolpyruvate-dependent sugar phosphotransferase system (PTS), a major carbohydrate active -transport system, catalyzes the phosphorylation of incoming sugar substrates concomitant with their translocation across the cell membrane. This is Fructose-like permease IIC component (fryC) from Escherichia coli O157:H7.